Here is a 531-residue protein sequence, read N- to C-terminus: SWI/SNF-related matrix-associated actin-dependent regulator of chromatin subfamily D member 2 (531 aa).

The tract at residues A20–A85 is disordered. Residues P34–P45 show a composition bias toward low complexity. R81 and R104 each carry asymmetric dimethylarginine. The residue at position 203 (S203) is a Phosphoserine. The interval S205–K226 is disordered. Over residues D210–D225 the composition is skewed to low complexity. The residue at position 217 (T217) is a Phosphothreonine. K226 is covalently cross-linked (Glycyl lysine isopeptide (Lys-Gly) (interchain with G-Cter in SUMO2)). The region spanning H306 to H383 is the SWIB/MDM2 domain.

Belongs to the SMARCD family. Component of the multiprotein chromatin-remodeling complexes SWI/SNF: SWI/SNF-A (BAF), SWI/SNF-B (PBAF) and related complexes. The canonical complex contains a catalytic subunit (either SMARCA4/BRG1/BAF190A or SMARCA2/BRM/BAF190B), and at least SMARCE1, ACTL6A/BAF53, SMARCC1/BAF155, SMARCC2/BAF170, and SMARCB1/SNF5/BAF47. Other subunits specific to each of the complexes may also be present permitting several possible combinations developmentally and tissue specific. Component of the BAF complex, which includes at least actin (ACTB), ARID1A/BAF250A, ARID1B/BAF250B, SMARCA2/BRM, SMARCA4/BRG1, ACTL6A/BAF53, ACTL6B/BAF53B, SMARCE1/BAF57, SMARCC1/BAF155, SMARCC2/BAF170, SMARCB1/SNF5/INI1, and one or more SMARCD1/BAF60A, SMARCD2/BAF60B, or SMARCD3/BAF60C. In muscle cells, the BAF complex also contains DPF3. Component of the SWI/SNF-B (PBAF) chromatin remodeling complex, at least composed of SMARCA4/BRG1, SMARCB1/BAF47/SNF5, ACTL6A/BAF53A or ACTL6B/BAF53B, SMARCE1/BAF57, SMARCD1/BAF60A, SMARCD2/BAF60B, perhaps SMARCD3/BAF60C, SMARCC1/BAF155, SMARCC2/BAF170, PBRM1/BAF180, ARID2/BAF200 and actin (ACTB). Interacts with UNKL. Interacts with CEBPE. Post-translationally, ubiquitinated through a signaling process involving RAC1 and the RING finger protein UNKL.

The protein localises to the nucleus. In terms of biological role, involved in transcriptional activation and repression of select genes by chromatin remodeling (alteration of DNA-nucleosome topology). Component of SWI/SNF chromatin remodeling complexes that carry out key enzymatic activities, changing chromatin structure by altering DNA-histone contacts within a nucleosome in an ATP-dependent manner. Critical regulator of myeloid differentiation, controlling granulocytopoiesis and the expression of genes involved in neutrophil granule formation. This Mus musculus (Mouse) protein is SWI/SNF-related matrix-associated actin-dependent regulator of chromatin subfamily D member 2 (Smarcd2).